A 412-amino-acid chain; its full sequence is Putative membrane protein 337L (412 aa).

Residues asparagine 171, asparagine 186, asparagine 247, and asparagine 271 are each glycosylated (N-linked (GlcNAc...) asparagine; by host). Residues 387 to 407 (VLITGIAVTGVAVLLFLLLMF) form a helical membrane-spanning segment.

Belongs to the IIV-6 337L family.

The protein resides in the virion membrane. This is Putative membrane protein 337L from Acheta domesticus (House cricket).